A 348-amino-acid chain; its full sequence is Phenylalanine--tRNA ligase alpha subunit (348 aa).

E262 serves as a coordination point for Mg(2+).

It belongs to the class-II aminoacyl-tRNA synthetase family. Phe-tRNA synthetase alpha subunit type 1 subfamily. Tetramer of two alpha and two beta subunits. Mg(2+) serves as cofactor.

Its subcellular location is the cytoplasm. The catalysed reaction is tRNA(Phe) + L-phenylalanine + ATP = L-phenylalanyl-tRNA(Phe) + AMP + diphosphate + H(+). This Streptococcus pneumoniae serotype 2 (strain D39 / NCTC 7466) protein is Phenylalanine--tRNA ligase alpha subunit.